We begin with the raw amino-acid sequence, 466 residues long: F-box/LRR-repeat protein fbxl-1 (466 aa).

Residues 54 to 100 (SLINRVLPKEVLLKVFSFLDTKALCRSAQVCRSWSILALDGSNWQRV) enclose the F-box domain. LRR repeat units follow at residues 122–147 (GGFLKELSLKGCENVHDSALRTFTSR), 148–173 (CPNLEHLSLYRCKRVTDASCENLGRY), 174–199 (CHKLNYLNLENCSSITDRAMKYIGDG), 200–225 (CPNLSYLNISWCDAIQDRGVQIILSN), 226–251 (CKSLDTLILRGCEGLTENVFGSVEAH), 252–277 (MGAIKKLNLLQCFQLTDITVQNIANG), 278–303 (ATALEYLCMSNCNQISDRSLVSLGQH), 304–329 (SHNLKVLELSGCTLLGDNGFIPLARG), 330–355 (CRQLERLDMEDCSLISDHTINSLANN), 356–381 (CTALRELSLSHCELITDESIQNLASK), and 408–433 (CKALKRIDLYDCQNVSKEAIVRFQHH).

Component of the SCF (SKP1-CUL1-F-box protein)-type E3 ubiquitin ligase complex. Expressed in neuroglial cells such as the socket cell and sheath cell, neurosecretory motor neurons and regions around the pharynx and anus.

The protein resides in the perikaryon. It localises to the cell projection. Its subcellular location is the dendrite. It is found in the cilium. The protein localises to the axon. Substrate-recognition component of the SCF (SKP1-CUL1-F-box protein)-type E3 ubiquitin ligase complex. Plays a role in regulating the entry into the dauer state. In hermaphrodites, may play a role in modulating the rate of defecation. The polypeptide is F-box/LRR-repeat protein fbxl-1 (Caenorhabditis elegans).